The chain runs to 908 residues: Probable disease resistance RPP8-like protein 4 (908 aa).

The stretch at 15-57 (DLLSRESERLQGIDEQLDGLKRQLRSLQSLLKDADAKKHGSDR) forms a coiled coil. The NB-ARC domain maps to 146–459 (RQRVQREIRQ…AEGIYDGSTI (314 aa)). 192 to 199 (GMGGIGKT) is a binding site for ATP. LRR repeat units lie at residues 575 to 599 (LTLL…SIGG), 600 to 623 (LIHL…MRNL), and 842 to 867 (MPCL…KYIT).

Belongs to the disease resistance NB-LRR family. RPP8/HRT subfamily.

In terms of biological role, potential disease resistance protein. The sequence is that of Probable disease resistance RPP8-like protein 4 (RPP8L4) from Arabidopsis thaliana (Mouse-ear cress).